The sequence spans 478 residues: Endoglucanase 18 (478 aa).

The signal sequence occupies residues 1–21 (MGKLLVVMLIGMFLAFESLEA). Asparagine 29 carries an N-linked (GlcNAc...) asparagine glycan. The active-site Nucleophile is aspartate 76. Residue histidine 398 is part of the active site. The tract at residues 433-452 (HTGAIVGGPNSSDQYSDKRT) is disordered. Asparagine 442 is a glycosylation site (N-linked (GlcNAc...) asparagine). Catalysis depends on residues aspartate 449 and glutamate 458.

It belongs to the glycosyl hydrolase 9 (cellulase E) family.

It localises to the secreted. It catalyses the reaction Endohydrolysis of (1-&gt;4)-beta-D-glucosidic linkages in cellulose, lichenin and cereal beta-D-glucans.. This is Endoglucanase 18 from Arabidopsis thaliana (Mouse-ear cress).